The primary structure comprises 381 residues: Probable tRNA sulfurtransferase (381 aa).

In terms of domain architecture, THUMP spans 57–160 (EKGIEKLKSV…NKAYVYSKKI (104 aa)). ATP-binding positions include 177–178 (ML), 202–203 (YF), arginine 259, glycine 281, and glutamine 290.

The protein belongs to the ThiI family.

Its subcellular location is the cytoplasm. The catalysed reaction is [ThiI sulfur-carrier protein]-S-sulfanyl-L-cysteine + a uridine in tRNA + 2 reduced [2Fe-2S]-[ferredoxin] + ATP + H(+) = [ThiI sulfur-carrier protein]-L-cysteine + a 4-thiouridine in tRNA + 2 oxidized [2Fe-2S]-[ferredoxin] + AMP + diphosphate. It carries out the reaction [ThiS sulfur-carrier protein]-C-terminal Gly-Gly-AMP + S-sulfanyl-L-cysteinyl-[cysteine desulfurase] + AH2 = [ThiS sulfur-carrier protein]-C-terminal-Gly-aminoethanethioate + L-cysteinyl-[cysteine desulfurase] + A + AMP + 2 H(+). It functions in the pathway cofactor biosynthesis; thiamine diphosphate biosynthesis. In terms of biological role, catalyzes the ATP-dependent transfer of a sulfur to tRNA to produce 4-thiouridine in position 8 of tRNAs, which functions as a near-UV photosensor. Also catalyzes the transfer of sulfur to the sulfur carrier protein ThiS, forming ThiS-thiocarboxylate. This is a step in the synthesis of thiazole, in the thiamine biosynthesis pathway. The sulfur is donated as persulfide by IscS. The chain is Probable tRNA sulfurtransferase from Clostridium kluyveri (strain NBRC 12016).